The sequence spans 279 residues: MRAEAAAHANHRSTALGSSFYLGMRTLPPVQREAIFQIYSFCRQVDDIADSDEPREHRLAALQQWRDHIDALYQCVPPPRLKDYLASVTTFGLKREDFLAVVDGMEMDVLQDIRAPKMATLDLYCDRVASAVGRMSVRVFGLSEEDGIALAHHLGRALQLTNILRDIDEDAGLGRLYIPRESLDHAGITSSDPHKVIADKALPKACAPLAQRAMMHFAESDEIMNCNPRRIVRAPTIMSKCYRAILDLLLIRGFAAPREPVRVTNLTKRAILFRYALML.

Belongs to the phytoene/squalene synthase family. HpnD subfamily.

It carries out the reaction 2 (2E,6E)-farnesyl diphosphate = presqualene diphosphate + diphosphate. It participates in secondary metabolite biosynthesis; hopanoid biosynthesis. Involved in the biosynthesis of the hopanoid precursor squalene (SQ) from farnesyl diphosphate (FPP). Catalyzes the first step, the formation of presqualene diphosphate (PSPP) from two molecules of FPP. In Sinorhizobium fredii (strain NBRC 101917 / NGR234), this protein is Presqualene diphosphate synthase.